A 71-amino-acid chain; its full sequence is Large ribosomal subunit protein bL31 (71 aa).

Positions 16, 18, 36, and 39 each coordinate Zn(2+).

Belongs to the bacterial ribosomal protein bL31 family. Type A subfamily. Part of the 50S ribosomal subunit. It depends on Zn(2+) as a cofactor.

Binds the 23S rRNA. This chain is Large ribosomal subunit protein bL31, found in Thermotoga maritima (strain ATCC 43589 / DSM 3109 / JCM 10099 / NBRC 100826 / MSB8).